A 274-amino-acid polypeptide reads, in one-letter code: Cytochrome b-c1 complex subunit Rieske, mitochondrial (274 aa).

The Mitochondrial matrix segment spans residues serine 79 to serine 103. A helical transmembrane segment spans residues arginine 104 to methionine 140. Topologically, residues serine 141–glycine 274 are mitochondrial intermembrane. The Rieske domain occupies glutamate 187–isoleucine 272. Residues cysteine 217, histidine 219, cysteine 236, histidine 239, and serine 241 each contribute to the [2Fe-2S] cluster site. Cysteines 222 and 238 form a disulfide.

This sequence belongs to the Rieske iron-sulfur protein family. In terms of assembly, component of the ubiquinol-cytochrome c oxidoreductase (cytochrome b-c1 complex, complex III, CIII), a multisubunit enzyme composed of 11 subunits. The complex is composed of 3 respiratory subunits cytochrome b, cytochrome c1 and Rieske protein UQCRFS1, 2 core protein subunits UQCRC1/QCR1 and UQCRC2/QCR2, and 6 low-molecular weight protein subunits UQCRH/QCR6, UQCRB/QCR7, UQCRQ/QCR8, UQCR10/QCR9, UQCR11/QCR10 and subunit 9, the cleavage product of Rieske protein UQCRFS1. The complex exists as an obligatory dimer and forms supercomplexes (SCs) in the inner mitochondrial membrane with NADH-ubiquinone oxidoreductase (complex I, CI) and cytochrome c oxidase (complex IV, CIV), resulting in different assemblies (supercomplex SCI(1)III(2)IV(1) and megacomplex MCI(2)III(2)IV(2)). Incorporation of the Rieske protein UQCRFS1 is the penultimate step in complex III assembly. Interacts with TTC19, which is involved in the clearance of UQCRFS1 fragments. Component of the ubiquinol-cytochrome c oxidoreductase (cytochrome b-c1 complex, complex III, CIII). Subunit 9 corresponds to the mitochondrial targeting sequence (MTS) of Rieske protein UQCRFS1. It is retained after processing and incorporated inside complex III, where it remains bound to the complex and localizes between the 2 core subunits UQCRC1/QCR1 and UQCRC2/QCR2. [2Fe-2S] cluster is required as a cofactor. In terms of processing, proteolytic processing is necessary for the correct insertion of UQCRFS1 in the complex III dimer. Several fragments are generated during UQCRFS1 insertion, most probably due to the endogenous matrix-processing peptidase (MPP) activity of the 2 core protein subunits UQCRC1/QCR1 and UQCRC2/QCR2, which are homologous to the 2 mitochondrial-processing peptidase (MPP) subunits beta-MPP and alpha-MPP respectively. The action of the protease is also necessary for the clearance of the UQCRFS1 fragments.

It localises to the mitochondrion inner membrane. The catalysed reaction is a quinol + 2 Fe(III)-[cytochrome c](out) = a quinone + 2 Fe(II)-[cytochrome c](out) + 2 H(+)(out). In terms of biological role, component of the ubiquinol-cytochrome c oxidoreductase, a multisubunit transmembrane complex that is part of the mitochondrial electron transport chain which drives oxidative phosphorylation. The respiratory chain contains 3 multisubunit complexes succinate dehydrogenase (complex II, CII), ubiquinol-cytochrome c oxidoreductase (cytochrome b-c1 complex, complex III, CIII) and cytochrome c oxidase (complex IV, CIV), that cooperate to transfer electrons derived from NADH and succinate to molecular oxygen, creating an electrochemical gradient over the inner membrane that drives transmembrane transport and the ATP synthase. The cytochrome b-c1 complex catalyzes electron transfer from ubiquinol to cytochrome c, linking this redox reaction to translocation of protons across the mitochondrial inner membrane, with protons being carried across the membrane as hydrogens on the quinol. In the process called Q cycle, 2 protons are consumed from the matrix, 4 protons are released into the intermembrane space and 2 electrons are passed to cytochrome c. The Rieske protein is a catalytic core subunit containing a [2Fe-2S] iron-sulfur cluster. It cycles between 2 conformational states during catalysis to transfer electrons from the quinol bound in the Q(0) site in cytochrome b to cytochrome c1. Incorporation of UQCRFS1 is the penultimate step in complex III assembly. Component of the ubiquinol-cytochrome c oxidoreductase (cytochrome b-c1 complex, complex III, CIII). UQCRFS1 undergoes proteolytic processing once it is incorporated in the complex III dimer. One of the fragments, called subunit 9, corresponds to its mitochondrial targeting sequence (MTS). The proteolytic processing is necessary for the correct insertion of UQCRFS1 in the complex III dimer, but the persistence of UQCRFS1-derived fragments may prevent newly imported UQCRFS1 to be processed and assembled into complex III and is detrimental for the complex III structure and function. The polypeptide is Cytochrome b-c1 complex subunit Rieske, mitochondrial (UQCRFS1) (Symphalangus syndactylus (Siamang)).